Reading from the N-terminus, the 37-residue chain is LKCKNKLVPFLSKTCPEGKNLCYKMTLKKVTPKIKRG.

As to quaternary structure, heterotetramer composed of two A and two B chains; non-covalently linked. Does not exist as a complex in the crude venom. In terms of processing, may contain several disulfide bonds. Expressed by the venom gland.

It is found in the secreted. In terms of biological role, hemextin A (monomer): exhibits mild anticoagulant activity. It specifically inhibits the activation of FX (F10) by the TF-FVIIa complex (extrinsic tenase complex (ETC)) by non-competitively inhibiting the enzymatic activity of FVIIa. Its function is as follows. Hemextin AB complex: specifically inhibits the activation of FX (F10) by the TF-FVIIa complex (extrinsic tenase complex (ETC)) (IC(50)= 100 nM, Ki=25 nM) by non-competitively inhibiting the enzymatic activity of FVIIa. In Hemachatus haemachatus (Rinkhals), this protein is Hemextin A.